The sequence spans 690 residues: MAAGVEAAAEVAATEPKMEEESGAPCVPSGNGAPVPKGEERPTQNEKRKEKNIKRGGNRFEPYANPTKRYRAFITNIPFDVKWQSLKDLVKEKVGEVTYVELLMDAEGKSRGCAVVEFKMEESMKKAAEVLNKHSLSGRPLKVKEDPDGEHARRAMQKAGRLGSTVFVANLDYKVGWKKLKEVFSMAGVVVRADILEDKDGKSRGIGTVTFEQSIEAVQAISMFNGQLLFDRPMHVKMDERALPKGDFFPPERPQQLPHGLGGIGMGLGPGGQPIDANHLNKGIGMGNLGPAGMGMEGIGFGINKIGGMEGPFGGGMENMGRFGSGMNMGRINEILSNALKRGEIIAKQGGSGAGGSVPGIERMGPGIDRISGAGMERMGAGLGHGMDRVGSEIERMGLVMDRMGSVERMGSGIERMGPLGLDHMASSIERMGQTMERIGSGVERMGAGMGFGLERMAAPIDRVGQTIERMGSGVERMGPAIERMGLSMDRMVPTGMGAGLERMGPVMDRMATGLERMGANNLERMGLERMGANSLERMGLERMGANSLERMGPAMGPALGAGIERMGLAMGGAGGASFDRTIEMERGNFGGSFAGSFGGAGGHAPGVARKACQIFVRNLPFDFTWKMLKDKFNECGHVLYADIKMENGKSKGCGVVKFESPEVAERACRMMNGMKLSGREIDVRIDRNA.

Residues 1 to 13 are compositionally biased toward low complexity; that stretch reads MAAGVEAAAEVAA. Positions 1–63 are disordered; that stretch reads MAAGVEAAAE…KRGGNRFEPY (63 aa). Position 2 is an N-acetylalanine (Ala2). Lys17 is covalently cross-linked (Glycyl lysine isopeptide (Lys-Gly) (interchain with G-Cter in SUMO2)). Ser29 carries the post-translational modification Phosphoserine. Glycyl lysine isopeptide (Lys-Gly) (interchain with G-Cter in SUMO2) cross-links involve residues Lys37, Lys68, and Lys82. Positions 37–49 are enriched in basic and acidic residues; that stretch reads KGEERPTQNEKRK. RRM domains are found at residues 70 to 148 and 164 to 241; these read YRAF…EDPD and STVF…MDER. The residue at position 85 (Ser85) is a Phosphoserine. Glycyl lysine isopeptide (Lys-Gly) (interchain with G-Cter in SUMO2) cross-links involve residues Lys87 and Lys126. N6-acetyllysine; alternate is present on Lys133. Lys133 is covalently cross-linked (Glycyl lysine isopeptide (Lys-Gly) (interchain with G-Cter in SUMO2); alternate). Glycyl lysine isopeptide (Lys-Gly) (interchain with G-Cter in SUMO2) cross-links involve residues Lys142 and Lys144. The residue at position 164 (Ser164) is a Phosphoserine. Lys181 participates in a covalent cross-link: Glycyl lysine isopeptide (Lys-Gly) (interchain with G-Cter in SUMO2). At Lys237 the chain carries N6-acetyllysine; alternate. Residue Lys237 forms a Glycyl lysine isopeptide (Lys-Gly) (interchain with G-Cter in SUMO2); alternate linkage. Residues Lys245 and Lys305 each participate in a glycyl lysine isopeptide (Lys-Gly) (interchain with G-Cter in SUMO2) cross-link. Phosphoserine is present on residues Ser325 and Ser337. Glycyl lysine isopeptide (Lys-Gly) (interchain with G-Cter in SUMO2) cross-links involve residues Lys341 and Lys348. Phosphoserine is present on Ser357. A run of 4 repeats spans residues 360–365, 367–372, 375–380, and 386–391. The interval 360–568 is 27 X 6 AA repeats of [GEVSTPAN]-[ILMV]-[DE]-[RH]-[MLVI]-[GAV]; the sequence is GIERMGPGID…ALGAGIERMG (209 aa). Ser392 bears the Phosphoserine mark. Tandem repeats lie at residues 393–398, 400–405, and 406–411. Phosphoserine is present on Ser412. 4 consecutive repeat copies span residues 413–418, 421–426, 428–433, and 435–440. Phosphoserine is present on Ser428. Ser441 bears the Phosphoserine mark. 16 tandem repeats follow at residues 442-447, 453-458, 460-465, 467-472, 474-479, 481-486, 488-493, 500-505, 507-512, 514-519, 522-527, 528-532, 535-540, 541-545, 548-553, and 563-568. The residue at position 456 (Arg456) is an Omega-N-methylarginine. The residue at position 488 (Ser488) is a Phosphoserine. Ser535 carries the phosphoserine modification. A Phosphoserine modification is found at Ser548. Phosphoserine is present on residues Ser578, Ser593, and Ser597. Residue Lys611 forms a Glycyl lysine isopeptide (Lys-Gly) (interchain with G-Cter in SUMO2) linkage. Residues 613–689 enclose the RRM 3 domain; sequence CQIFVRNLPF…REIDVRIDRN (77 aa). Residue Thr625 is modified to Phosphothreonine. A Glycyl lysine isopeptide (Lys-Gly) (interchain with G-Cter in SUMO2) cross-link involves residue Lys627. Lys632 carries the N6-acetyllysine modification. Glycyl lysine isopeptide (Lys-Gly) (interchain with G-Cter in SUMO2) cross-links involve residues Lys645 and Lys652. Residue Lys658 is modified to N6-acetyllysine; alternate. A Glycyl lysine isopeptide (Lys-Gly) (interchain with G-Cter in SUMO2); alternate cross-link involves residue Lys658. Lys658 is covalently cross-linked (Glycyl lysine isopeptide (Lys-Gly) (interchain with G-Cter in SUMO1); alternate). At Ser661 the chain carries Phosphoserine. A Glycyl lysine isopeptide (Lys-Gly) (interchain with G-Cter in SUMO2) cross-link involves residue Lys676.

Identified in the spliceosome C complex. Interacts with PPIA/CYPA. Post-translationally, sumoylated. As to expression, expressed in all tissues tested, including liver, heart, lung, skeletal muscle, kidney, stomach, large intestine, small intestine, pancreas, spleen, peritoneal macrophage and thyroid.

Its subcellular location is the nucleus matrix. In terms of biological role, pre-mRNA binding protein, binds avidly to poly(G) and poly(U) RNA homopolymers. Involved in splicing. Acts as a receptor for carcinoembryonic antigen in Kupffer cells, may initiate a series of signaling events leading to tyrosine phosphorylation of proteins and induction of IL-1 alpha, IL-6, IL-10 and tumor necrosis factor alpha cytokines. This chain is Heterogeneous nuclear ribonucleoprotein M (Hnrnpm), found in Rattus norvegicus (Rat).